Consider the following 149-residue polypeptide: Oligosaccharyltransferase complex subunit ostc (149 aa).

Over 1–32 (MESLYRVPFTVLECPNLKLKKPSWLHMPSAMT) the chain is Cytoplasmic. The chain crosses the membrane as a helical span at residues 33 to 53 (VYAMVVVSYFLITGGIIYDVI). Over 54 to 83 (VEPPSVGSMTDEHGHQRPVAFLAYRVNGQY) the chain is Extracellular. Residues 84–104 (IMEGLASSFLFTMGGLGFIIL) form a helical membrane-spanning segment. Residues 105–117 (DRSNAPNIPKLNR) are Cytoplasmic-facing. The chain crosses the membrane as a helical span at residues 118–138 (FLLLFIGFVCVLLSFFMARVF). Over 139-149 (MRMKLPGYLMG) the chain is Extracellular.

The protein belongs to the OSTC family. As to quaternary structure, specific component of the STT3A-containing form of the oligosaccharyltransferase (OST) complex.

The protein localises to the membrane. Its pathway is protein modification; protein glycosylation. Specific component of the STT3A-containing form of the oligosaccharyl transferase (OST) complex that catalyzes the initial transfer of a defined glycan (Glc(3)Man(9)GlcNAc(2) in eukaryotes) from the lipid carrier dolichol-pyrophosphate to an asparagine residue within an Asn-X-Ser/Thr consensus motif in nascent polypeptide chains, the first step in protein N-glycosylation. N-glycosylation occurs cotranslationally and the complex associates with the Sec61 complex at the channel-forming translocon complex that mediates protein translocation across the endoplasmic reticulum (ER). All subunits are required for a maximal enzyme activity. In Xenopus tropicalis (Western clawed frog), this protein is Oligosaccharyltransferase complex subunit ostc.